The chain runs to 1041 residues: Importin-9 (1041 aa).

An N-acetylalanine modification is found at Ala-2. Residues 43-119 (AEEQIKVLEV…RELLPNGLRE (77 aa)) enclose the Importin N-terminal domain. The disordered stretch occupies residues 936 to 967 (QATPAEWSQDDSNDMWEDQEEEEEEEEDGLAG). The segment covering 943-964 (SQDDSNDMWEDQEEEEEEEEDG) has biased composition (acidic residues).

The protein belongs to the importin beta family. As to quaternary structure, interacts with histones H2A, H2B, H3 and H4. The binding is coupled to RanGTP cycles. Interacts with AKIRIN2; promoting association with pre-assembled proteasomes. Associates with pre-assembled proteasomes; interaction is indirect and mediated via interaction with AKIRIN2. Interacts with PPP2R1A and PPP2R1B.

It is found in the cytoplasm. The protein resides in the nucleus. Its function is as follows. Nuclear transport receptor that mediates nuclear import of proteins, such as histones, proteasome and actin. Serves as receptor for nuclear localization signals (NLS) in cargo substrates. Is thought to mediate docking of the importin/substrate complex to the nuclear pore complex (NPC) through binding to nucleoporin and the complex is subsequently translocated through the pore by an energy requiring, Ran-dependent mechanism. At the nucleoplasmic side of the NPC, Ran binds to the importin, the importin/substrate complex dissociates and importin is re-exported from the nucleus to the cytoplasm where GTP hydrolysis releases Ran. The directionality of nuclear import is thought to be conferred by an asymmetric distribution of the GTP- and GDP-bound forms of Ran between the cytoplasm and nucleus. Mediates the import of pre-assembled proteasomes into the nucleus; AKIRIN2 acts as a molecular bridge between IPO9 and the proteasome complex. Mediates the nuclear import of histones H2A, H2B, H4 and H4. In addition to nuclear import, also acts as a chaperone for histones by preventing inappropriate non-nucleosomal interactions. Mediates the nuclear import of actin. This is Importin-9 from Homo sapiens (Human).